A 939-amino-acid polypeptide reads, in one-letter code: Isoleucine--tRNA ligase (939 aa).

The short motif at 57-67 is the 'HIGH' region element; that stretch reads PYANGEIHIGH. Glu-563 serves as a coordination point for L-isoleucyl-5'-AMP. Residues 604–608 carry the 'KMSKS' region motif; that stretch reads KMSKS. Lys-607 provides a ligand contact to ATP. Cys-902, Cys-905, Cys-922, and Cys-925 together coordinate Zn(2+).

It belongs to the class-I aminoacyl-tRNA synthetase family. IleS type 1 subfamily. In terms of assembly, monomer. Zn(2+) is required as a cofactor.

It is found in the cytoplasm. The catalysed reaction is tRNA(Ile) + L-isoleucine + ATP = L-isoleucyl-tRNA(Ile) + AMP + diphosphate. Functionally, catalyzes the attachment of isoleucine to tRNA(Ile). As IleRS can inadvertently accommodate and process structurally similar amino acids such as valine, to avoid such errors it has two additional distinct tRNA(Ile)-dependent editing activities. One activity is designated as 'pretransfer' editing and involves the hydrolysis of activated Val-AMP. The other activity is designated 'posttransfer' editing and involves deacylation of mischarged Val-tRNA(Ile). In Methylococcus capsulatus (strain ATCC 33009 / NCIMB 11132 / Bath), this protein is Isoleucine--tRNA ligase.